The following is a 442-amino-acid chain: ATP-dependent protease ATPase subunit HslU (442 aa).

Residues isoleucine 18 and 60–65 (GVGKTE) contribute to the ATP site. Positions 137–156 (PKPKNDWESTETDSSSNTRQ) are disordered. ATP contacts are provided by aspartate 255, glutamate 320, and arginine 392.

It belongs to the ClpX chaperone family. HslU subfamily. A double ring-shaped homohexamer of HslV is capped on each side by a ring-shaped HslU homohexamer. The assembly of the HslU/HslV complex is dependent on binding of ATP.

It localises to the cytoplasm. In terms of biological role, ATPase subunit of a proteasome-like degradation complex; this subunit has chaperone activity. The binding of ATP and its subsequent hydrolysis by HslU are essential for unfolding of protein substrates subsequently hydrolyzed by HslV. HslU recognizes the N-terminal part of its protein substrates and unfolds these before they are guided to HslV for hydrolysis. The chain is ATP-dependent protease ATPase subunit HslU from Shewanella baltica (strain OS155 / ATCC BAA-1091).